A 156-amino-acid chain; its full sequence is Acyl carrier protein, mitochondrial (156 aa).

Residues 1-68 constitute a mitochondrion transit peptide; it reads MASRVLSAYV…GRVTQLCRQY (68 aa). The region spanning 77-152 is the Carrier domain; the sequence is EGIQDRVLYV…EIVDYIADKK (76 aa). Lys88 carries the post-translational modification N6-acetyllysine. An O-(pantetheine 4'-phosphoryl)serine modification is found at Ser112.

The protein belongs to the acyl carrier protein (ACP) family. In terms of assembly, mammalian complex I is composed of 45 different subunits. Interacts with ETFRF1. Identified in a complex composed of MALSU1, MIEF1 upstream open reading frame protein and NDUFAB1; within the trimeric complex, MIEF1 upstream open reading frame protein functions as a bridging scaffold that interacts with MALSU1 on one side, and with NDUFAB1 on the other side. The complex interacts with the mitochondrial large ribosomal subunit. Interacts with alpha-1-microglobulin chain; this interaction is required for the maintenance of mitochondrial redox homeostasis. Component of the mitochondrial core iron-sulfur cluster (ISC) complex composed of NFS1, LYRM4, NDUFAB1, ISCU, FXN, and FDX2; this complex is a heterohexamer containing two copies of each monomer. Component of the cyteine desulfurase complex composed of NFS1, LYRM4 and NDUFAB1; this complex contributes to the stability and cysteine desulfurase activity of NFS1. Phosphopantetheinylation at Ser-112 is essential for interactions with LYR motif-containing proteins.

Its subcellular location is the mitochondrion. Carrier of the growing fatty acid chain in fatty acid biosynthesis. Accessory and non-catalytic subunit of the mitochondrial membrane respiratory chain NADH dehydrogenase (Complex I), which functions in the transfer of electrons from NADH to the respiratory chain. Accessory protein, of the core iron-sulfur cluster (ISC) assembly complex, that regulates, in association with LYRM4, the stability and the cysteine desulfurase activity of NFS1 and participates in the [2Fe-2S] clusters assembly on the scaffolding protein ISCU. The core iron-sulfur cluster (ISC) assembly complex is involved in the de novo synthesis of a [2Fe-2S] cluster, the first step of the mitochondrial iron-sulfur protein biogenesis. This process is initiated by the cysteine desulfurase complex (NFS1:LYRM4:NDUFAB1) that produces persulfide which is delivered on the scaffold protein ISCU in a FXN-dependent manner. Then this complex is stabilized by FDX2 which provides reducing equivalents to accomplish the [2Fe-2S] cluster assembly. Finally, the [2Fe-2S] cluster is transferred from ISCU to chaperone proteins, including HSCB, HSPA9 and GLRX5. This chain is Acyl carrier protein, mitochondrial, found in Pongo pygmaeus (Bornean orangutan).